Reading from the N-terminus, the 1124-residue chain is MTSSGKIRIYELSKDLGLENKDVLHAAEKLSIAAKSHSSSISDDEAKRIRGLLRQGSAANSAPPSKSEPGKTILSVKKAAPTAIKDVAPPMRKATSSSEISQVKPSAPANPTPTSPERLSRESVAHPAPPTRPVNPTTTPTSSPPKTAARPVNAPISRPATPSRPSAPTPRSANKPSSPVPPSTGSKDPRAGQTSTSSKATTVSGGGPRPKIISRPQSPAAPGRSAPPAKPSIPSDRKAPKPELVGRPKPKRPVVAPPSRPEPEGQRPDKKRPGISPRPIGGPNQRANTPQRPGAPIRQGKTRPGQPRSAGNTLELVGKPIRRDRSDAGSAGRDSNNRPGAPTRPGMPAGMRKPVAPGELMQLQKPTGRPGTPPPRRPDGTSVGTRGGSEGATPPVERPASPTAPKRPGHRPAQAPAAGAPRRPGRPDWDDSAKLEALRNKSPQKQRQKVHIIGENDDALTAETSGYAGEQQAVVLTASLARPAKPKSQKKPASKPVAALRKRKKETTRQRQRRRAMELRAAREAKQVRPEMLIVPEANLTVQELADMLSIESSEIIKSLFFKGITATVTQSLDLPTIEAVAEEFGVPVLQDDIEEAAKKTTEMIEETDLAHLIRRPPVVTVMGHVDHGKTSLLDAIRKARVAAVEAGGITQHIGAYQVEIDHGGQPRKITFLDTPGHQAFTAMRARGTKVTDIAVLVVAADDGVRPQTLEAISHARAAKVPIIVAINKTDKEGASPERVKQELSDQNLLSEEWGGDVVMVPVSAIKGENIDKLLEMILLVTEVEDLQANPDRLAKGTVIEAHLDKAKGPVATLLIQNGTLKTGDVLAAGPVLGKVRAMVDDSGARLKQAGPADAVEALGFSEVPTAGDEFEVYPDEKSARAVVGERASDARATRLAQQMASRRVSLAAMSGQASDGELKELNLILKADVQGSVEAILGSLEQLPKDEVQVRVLLSAPGEITETDVDLAAASGAVIVGFNTSMASGAKRAADATGVDVRDYDVIYKLLEDIQMAMEGLLEPELVEESLGEAEVRAVFTIGKSAVAGCYITTGKLQRNCRVRVRRAKQVVFEGDLDSLRRNKDDVKEVATGFECGIGCDRFANWEERDIIEAHKLVTKRRTLSSS.

The span at 32 to 41 (IAAKSHSSSI) shows a compositional bias: low complexity. Disordered stretches follow at residues 32-451 (IAAK…QKVH) and 480-523 (LARP…RAAR). The segment covering 94 to 104 (ATSSSEISQVK) has biased composition (polar residues). Low complexity predominate over residues 134-173 (VNPTTTPTSSPPKTAARPVNAPISRPATPSRPSAPTPRSA). The segment covering 192-203 (GQTSTSSKATTV) has biased composition (polar residues). The span at 214 to 227 (SRPQSPAAPGRSAP) shows a compositional bias: low complexity. Composition is skewed to basic and acidic residues over residues 235–246 (SDRKAPKPELVG) and 261–272 (PEPEGQRPDKKR). 2 stretches are compositionally biased toward low complexity: residues 274 to 283 (GISPRPIGGP) and 411 to 422 (RPAQAPAAGAPR). Residues 425 to 439 (GRPDWDDSAKLEALR) are compositionally biased toward basic and acidic residues. 2 stretches are compositionally biased toward basic residues: residues 484–493 (AKPKSQKKPA) and 500–514 (LRKRKKETTRQRQRR). The tr-type G domain occupies 615–787 (RRPPVVTVMG…ILLVTEVEDL (173 aa)). Positions 624-631 (GHVDHGKT) are G1. 624–631 (GHVDHGKT) serves as a coordination point for GTP. A G2 region spans residues 649 to 653 (GITQH). The tract at residues 674–677 (DTPG) is G3. Residues 674-678 (DTPGH) and 728-731 (NKTD) contribute to the GTP site. The G4 stretch occupies residues 728–731 (NKTD). Residues 764 to 766 (SAI) are G5.

It belongs to the TRAFAC class translation factor GTPase superfamily. Classic translation factor GTPase family. IF-2 subfamily.

Its subcellular location is the cytoplasm. In terms of biological role, one of the essential components for the initiation of protein synthesis. Protects formylmethionyl-tRNA from spontaneous hydrolysis and promotes its binding to the 30S ribosomal subunits. Also involved in the hydrolysis of GTP during the formation of the 70S ribosomal complex. This Prochlorococcus marinus (strain MIT 9303) protein is Translation initiation factor IF-2.